The following is a 72-amino-acid chain: uncharacterized protein (72 aa).

Residues 27–55 (YTQNLINELQEARDSINDLQRAHERLKLV) adopt a coiled-coil conformation.

This is an uncharacterized protein from Schizosaccharomyces pombe (strain 972 / ATCC 24843) (Fission yeast).